A 244-amino-acid chain; its full sequence is tRNA pseudouridine synthase B (244 aa).

Aspartate 46 functions as the Nucleophile in the catalytic mechanism.

This sequence belongs to the pseudouridine synthase TruB family. Type 1 subfamily.

The enzyme catalyses uridine(55) in tRNA = pseudouridine(55) in tRNA. In terms of biological role, responsible for synthesis of pseudouridine from uracil-55 in the psi GC loop of transfer RNAs. The protein is tRNA pseudouridine synthase B of Bordetella avium (strain 197N).